We begin with the raw amino-acid sequence, 624 residues long: Actin-related protein 8 (624 aa).

Position 1 is an N-acetylmethionine (Met-1). A compositionally biased stretch (basic and acidic residues) spans 1–25 (MTQAEKGDAENGKEKGGEKEKEQRG). The disordered stretch occupies residues 1 to 29 (MTQAEKGDAENGKEKGGEKEKEQRGVKRP). 2 residues coordinate ATP: Ser-55 and Thr-56. A Phosphoserine modification is found at Ser-132. 283–286 (DVGD) provides a ligand contact to ATP. Residue Ser-412 is modified to Phosphoserine. Residues 430–460 (SKQEQSAKATADRKSASKPIGFEGDLRGQSS) form a disordered region.

The protein belongs to the actin family. ARP8 subfamily. Component of the chromatin remodeling INO80 complex; specifically part of a complex module associated with the DBINO domain of INO80. Exists as monomers and dimers, but the dimer is most probably the biologically relevant form required for stable interactions with histones that exploits the twofold symmetry of the nucleosome core.

It is found in the nucleus. Its subcellular location is the chromosome. Its function is as follows. Plays an important role in the functional organization of mitotic chromosomes. Exhibits low basal ATPase activity, and unable to polymerize. In terms of biological role, proposed core component of the chromatin remodeling INO80 complex which is involved in transcriptional regulation, DNA replication and probably DNA repair. Required for the recruitment of INO80 (and probably the INO80 complex) to sites of DNA damage Strongly prefer nucleosomes and H3-H4 tetramers over H2A-H2B dimers, suggesting it may act as a nucleosome recognition module within the complex. The sequence is that of Actin-related protein 8 (ACTR8) from Ailuropoda melanoleuca (Giant panda).